The following is a 290-amino-acid chain: Glycine--tRNA ligase alpha subunit (290 aa).

The protein belongs to the class-II aminoacyl-tRNA synthetase family. Tetramer of two alpha and two beta subunits.

It localises to the cytoplasm. The catalysed reaction is tRNA(Gly) + glycine + ATP = glycyl-tRNA(Gly) + AMP + diphosphate. The chain is Glycine--tRNA ligase alpha subunit from Nitratiruptor sp. (strain SB155-2).